Consider the following 335-residue polypeptide: MTIAPEGRKLLRVEARNAEVPIEKKPSWLKNTAKMGPQFTELKSMARGRGLHTVCEEAGCPNIYECWEDREATFLIGGDTCTRRCDFCDIATGKPGMVDVAEPRKVAESVRDLGLRYATVTSVARDDLADGGAWLNAETIRAIHAMNPSTGVEILIPDFKGQPDAVQQVIDAQPEVFAHNLETVPRIFKQIRPAFAYERSLDVLTQGKEHGMIVKSNLILGMGETDDEVYEALCDLHDAGCDIITLTQYLRPGPTFHPIDRWVKPETFVELSKAAEEIGFLGVMAGPMVRSSYRAGKLWARAMKKMGREIPEHLSHIDDSGSATQEASSLLARLG.

Cys-55, Cys-60, Cys-66, Cys-81, Cys-85, Cys-88, and Ser-292 together coordinate [4Fe-4S] cluster. The Radical SAM core domain maps to 67–281 (WEDREATFLI…SKAAEEIGFL (215 aa)).

Belongs to the radical SAM superfamily. Lipoyl synthase family. It depends on [4Fe-4S] cluster as a cofactor.

It localises to the cytoplasm. The enzyme catalyses [[Fe-S] cluster scaffold protein carrying a second [4Fe-4S](2+) cluster] + N(6)-octanoyl-L-lysyl-[protein] + 2 oxidized [2Fe-2S]-[ferredoxin] + 2 S-adenosyl-L-methionine + 4 H(+) = [[Fe-S] cluster scaffold protein] + N(6)-[(R)-dihydrolipoyl]-L-lysyl-[protein] + 4 Fe(3+) + 2 hydrogen sulfide + 2 5'-deoxyadenosine + 2 L-methionine + 2 reduced [2Fe-2S]-[ferredoxin]. Its pathway is protein modification; protein lipoylation via endogenous pathway; protein N(6)-(lipoyl)lysine from octanoyl-[acyl-carrier-protein]: step 2/2. Catalyzes the radical-mediated insertion of two sulfur atoms into the C-6 and C-8 positions of the octanoyl moiety bound to the lipoyl domains of lipoate-dependent enzymes, thereby converting the octanoylated domains into lipoylated derivatives. In Kocuria rhizophila (strain ATCC 9341 / DSM 348 / NBRC 103217 / DC2201), this protein is Lipoyl synthase.